Reading from the N-terminus, the 87-residue chain is Small ribosomal subunit protein bS20 (87 aa).

Belongs to the bacterial ribosomal protein bS20 family.

In terms of biological role, binds directly to 16S ribosomal RNA. The polypeptide is Small ribosomal subunit protein bS20 (Clostridium perfringens (strain ATCC 13124 / DSM 756 / JCM 1290 / NCIMB 6125 / NCTC 8237 / Type A)).